The sequence spans 143 residues: Holo-[acyl-carrier-protein] synthase (143 aa).

Mg(2+)-binding residues include Asp9 and Glu63.

It belongs to the P-Pant transferase superfamily. AcpS family. It depends on Mg(2+) as a cofactor.

The protein resides in the cytoplasm. The catalysed reaction is apo-[ACP] + CoA = holo-[ACP] + adenosine 3',5'-bisphosphate + H(+). Functionally, transfers the 4'-phosphopantetheine moiety from coenzyme A to a Ser of acyl-carrier-protein. In Burkholderia mallei (strain NCTC 10247), this protein is Holo-[acyl-carrier-protein] synthase.